Here is a 461-residue protein sequence, read N- to C-terminus: Protein DVR-1 homolog (461 aa).

A signal peptide spans 1–30 (MEYSRKTYLDLNIMAKYILILSLFFGPGLS). A propeptide spanning residues 31-338 (WDVFYSGDED…QKKGGKRPRK (308 aa)) is cleaved from the precursor. N-linked (GlcNAc...) asparagine glycosylation is present at Asn149. Residues 317–351 (SHLRRNRRAATRQKKGGKRPRKPDTDNDIASRDSA) are disordered. Positions 318 to 337 (HLRRNRRAATRQKKGGKRPR) are enriched in basic residues. The segment covering 338-347 (KPDTDNDIAS) has biased composition (basic and acidic residues). Intrachain disulfides connect Cys360–Cys426, Cys389–Cys458, and Cys393–Cys460. Residue Asn402 is glycosylated (N-linked (GlcNAc...) asparagine).

This sequence belongs to the TGF-beta family. In terms of assembly, homodimer; disulfide-linked.

Its subcellular location is the secreted. The protein is Protein DVR-1 homolog (DVR1) of Strongylocentrotus purpuratus (Purple sea urchin).